The chain runs to 777 residues: Myotubularin-related protein 10 (777 aa).

Residues 196–217 (PSGDGGGGGGGGNGAGGGSSQK) are disordered. Residues 197 to 214 (SGDGGGGGGGGNGAGGGS) are compositionally biased toward gly residues. A Myotubularin phosphatase domain is found at 221 to 661 (FETYSDWDRE…THIKLWKLCY (441 aa)). Residues Ser607 and Ser751 each carry the phosphoserine modification.

It belongs to the protein-tyrosine phosphatase family. Non-receptor class myotubularin subfamily.

The polypeptide is Myotubularin-related protein 10 (MTMR10) (Homo sapiens (Human)).